The sequence spans 404 residues: Cysteine desulfurase IscS (404 aa).

Pyridoxal 5'-phosphate contacts are provided by residues 75-76 (AT), Asn155, Gln183, and 203-205 (SAH). Lys206 bears the N6-(pyridoxal phosphate)lysine mark. Thr243 is a binding site for pyridoxal 5'-phosphate. The active-site Cysteine persulfide intermediate is Cys328. Position 328 (Cys328) interacts with [2Fe-2S] cluster.

This sequence belongs to the class-V pyridoxal-phosphate-dependent aminotransferase family. NifS/IscS subfamily. As to quaternary structure, homodimer. Forms a heterotetramer with IscU, interacts with other sulfur acceptors. It depends on pyridoxal 5'-phosphate as a cofactor.

The protein resides in the cytoplasm. The catalysed reaction is (sulfur carrier)-H + L-cysteine = (sulfur carrier)-SH + L-alanine. It functions in the pathway cofactor biosynthesis; iron-sulfur cluster biosynthesis. In terms of biological role, master enzyme that delivers sulfur to a number of partners involved in Fe-S cluster assembly, tRNA modification or cofactor biosynthesis. Catalyzes the removal of elemental sulfur atoms from cysteine to produce alanine. Functions as a sulfur delivery protein for Fe-S cluster synthesis onto IscU, an Fe-S scaffold assembly protein, as well as other S acceptor proteins. The polypeptide is Cysteine desulfurase IscS (Azotobacter vinelandii (strain DJ / ATCC BAA-1303)).